The sequence spans 424 residues: Translation initiation factor 2 subunit gamma (424 aa).

Residues 23-220 (LPEVNIGLVG…AIEETIPTPE (198 aa)) form the tr-type G domain. The tract at residues 32–39 (GHVDHGKT) is G1. Residues aspartate 35, threonine 39, glycine 60, and serine 62 each coordinate Mg(2+). Residue 35–40 (DHGKTT) coordinates GTP. Positions 60 to 64 (GISIK) are G2. Residues 107-110 (DSPG) form a G3 region. Residues 163-166 (NKID) and 198-200 (SAQ) contribute to the GTP site. The segment at 163-166 (NKID) is G4. Positions 198 to 200 (SAQ) are G5.

This sequence belongs to the TRAFAC class translation factor GTPase superfamily. Classic translation factor GTPase family. EIF2G subfamily. As to quaternary structure, heterotrimer composed of an alpha, a beta and a gamma chain. It depends on Mg(2+) as a cofactor.

It catalyses the reaction GTP + H2O = GDP + phosphate + H(+). Its function is as follows. eIF-2 functions in the early steps of protein synthesis by forming a ternary complex with GTP and initiator tRNA. In Archaeoglobus fulgidus (strain ATCC 49558 / DSM 4304 / JCM 9628 / NBRC 100126 / VC-16), this protein is Translation initiation factor 2 subunit gamma.